Consider the following 306-residue polypeptide: Pantothenate kinase (306 aa).

Position 90–97 (90–97 (GSVAVGKS)) interacts with ATP.

This sequence belongs to the prokaryotic pantothenate kinase family.

The protein localises to the cytoplasm. The enzyme catalyses (R)-pantothenate + ATP = (R)-4'-phosphopantothenate + ADP + H(+). It participates in cofactor biosynthesis; coenzyme A biosynthesis; CoA from (R)-pantothenate: step 1/5. The sequence is that of Pantothenate kinase from Listeria welshimeri serovar 6b (strain ATCC 35897 / DSM 20650 / CCUG 15529 / CIP 8149 / NCTC 11857 / SLCC 5334 / V8).